The following is a 589-amino-acid chain: MLSRTVPRCVKYGSTPKDIRYGMEARNALLAGVENLVKAVGVTLGPKGRNVILEMPYACPKITKDGVTVAKSIEFEDSFENLGANLVRQVAGLTNDNAGDGTTTATVLSGAIFKEGFRSVASGTNPMDLKRGIDLACREVLISLAEQSRPVTSKSEITQVAMISANMDQEIGSLIGDAMQQVGKDGVITTQEGRSLNTELELVEGMSFERGYTSPYFVTNTKAQRCELENALVYVANRKLTSVAHILPALNYAIQQKRPLLVIAEDVEGEAMHTFLYNKIQGRISGCAVKAPGFGDMRINQLQDIAVFTGSQMISEDLGLSLDQNDFSERFLGTCRKVTVSRDECILMEGGGSAIAVEERVQMIKDMISAEDHEYNRERLVERLAKLSGGVAVIKVGGASEVEINEKKDRIIDALNATRAAVSEGILAGGGTGLLMASLRLESISKDRRLPPDIRTGVNIVKKAIGLPARYIANNAGVEGSVVAGKVLARKDPSFGYNAQTGEYVNMFEAGIIDPMKVVKSAVVNACSVAGMMITTEAAVVEKDLLGREKRIEDEGMEDKEKKRSVDKLRKQVNEAGRTDAQDGAADEV.

Residues 550–581 (KRIEDEGMEDKEKKRSVDKLRKQVNEAGRTDA) show a composition bias toward basic and acidic residues. Residues 550–589 (KRIEDEGMEDKEKKRSVDKLRKQVNEAGRTDAQDGAADEV) are disordered.

Belongs to the chaperonin (HSP60) family.

The protein localises to the mitochondrion matrix. Implicated in mitochondrial protein import and macromolecular assembly. May facilitate the correct folding of imported proteins. May also prevent misfolding and promote the refolding and proper assembly of unfolded polypeptides generated under stress conditions in the mitochondrial matrix. In Leishmania major, this protein is Chaperonin HSP60, mitochondrial (HSP60).